The sequence spans 523 residues: Pentatricopeptide repeat-containing protein At3g21470 (523 aa).

PPR repeat units lie at residues 10–43 (GEFHVSNLIKNHISRGSPIQALVLYGGIRRRGVY), 44–79 (FPGWVPLILRACACVVPRVVLGKLLHSESIKFGVCS), 80–114 (DVMVGSSLISMYGKCGCVVSARKVFDEMPERNVAT), 115–141 (WNAMIGGYMSNGDAVLASGLFEEISVC), 143–173 (NTVTWIEMIKGYGKRIEIEKARELFERMPFE), 176–210 (NVKAWSVMLGVYVNNRKMEDARKFFEDIPEKNAFV), 211–237 (WSLMMSGYFRIGDVHEARAIFYRVFAR), 238–272 (DLVIWNTLIAGYAQNGYSDDAIDAFFNMQGEGYEP), 273–307 (DAVTVSSILSACAQSGRLDVGREVHSLINHRGIEL), 308–338 (NQFVSNALIDMYAKCGDLENATSVFESISVR), 339–373 (SVACCNSMISCLAIHGKGKEALEMFSTMESLDLKP), 374–408 (DEITFIAVLTACVHGGFLMEGLKIFSEMKTQDVKP), and 409–439 (NVKHFGCLIHLLGRSGKLKEAYRLVKEMHVK). The type E motif stretch occupies residues 444–523 (VLGALLGACK…SPGLSSLVLT (80 aa)).

The protein belongs to the PPR family. PCMP-E subfamily.

The polypeptide is Pentatricopeptide repeat-containing protein At3g21470 (PCMP-E29) (Arabidopsis thaliana (Mouse-ear cress)).